The chain runs to 309 residues: Probable MRF1 mitochondrial N(5)-glutamine methyltransferase mtq1 (309 aa).

Residues C124–G128, D148, and N200 each bind S-adenosyl-L-methionine. N200–Y203 is a binding site for substrate.

The protein belongs to the protein N5-glutamine methyltransferase family.

Its subcellular location is the mitochondrion. The enzyme catalyses L-glutaminyl-[peptide chain release factor] + S-adenosyl-L-methionine = N(5)-methyl-L-glutaminyl-[peptide chain release factor] + S-adenosyl-L-homocysteine + H(+). Methylates MRF1 on 'Gln-270' using S-adenosyl L-methionine as methyl donor. The sequence is that of Probable MRF1 mitochondrial N(5)-glutamine methyltransferase mtq1 (mtq1) from Schizosaccharomyces pombe (strain 972 / ATCC 24843) (Fission yeast).